A 149-amino-acid polypeptide reads, in one-letter code: Ribosome-binding factor A (149 aa).

A disordered region spans residues 125-149; that stretch reads FGSADEVLNEDEGATDDTDDTKGKD. Residues 131–143 show a composition bias toward acidic residues; it reads VLNEDEGATDDTD.

Belongs to the RbfA family. Monomer. Binds 30S ribosomal subunits, but not 50S ribosomal subunits or 70S ribosomes.

The protein resides in the cytoplasm. Functionally, one of several proteins that assist in the late maturation steps of the functional core of the 30S ribosomal subunit. Associates with free 30S ribosomal subunits (but not with 30S subunits that are part of 70S ribosomes or polysomes). Required for efficient processing of 16S rRNA. May interact with the 5'-terminal helix region of 16S rRNA. This Shewanella sp. (strain W3-18-1) protein is Ribosome-binding factor A.